Here is a 1035-residue protein sequence, read N- to C-terminus: Ephrin type-A receptor 6 (1035 aa).

A signal peptide spans 1-22 (MGGCEVREFLLQFGFFLPLLTA). Topologically, residues 23–549 (WTGDCSHVSN…MAAEQGQILV (527 aa)) are extracellular. Residues 33–211 (QVVLLDTTTV…FYKKCPFTVR (179 aa)) enclose the Eph LBD domain. 2 Fibronectin type-III domains span residues 330–440 (PPSA…TDHD) and 441–536 (APSL…TGDE). 3 N-linked (GlcNAc...) asparagine glycosylation sites follow: Asn342, Asn396, and Asn409. The chain crosses the membrane as a helical span at residues 550-570 (IATAAVGGFTLLVILTLFFLI). Topologically, residues 571–1035 (TGRCQWYIKA…MHIQEKGFHV (465 aa)) are cytoplasmic. Residues Tyr605 and Tyr611 each carry the phosphotyrosine; by autocatalysis modification. Residues 630–943 (IRIERVIGAG…RNPSALHTLV (314 aa)) enclose the Protein kinase domain. ATP-binding positions include 636 to 644 (IGAGEFGEV) and Lys662. The active-site Proton acceptor is the Asp797. 2 positions are modified to phosphotyrosine; by autocatalysis: Tyr830 and Tyr977. The SAM domain occupies 960 to 1024 (PLFVTVGDWL…VSSIQTLRLH (65 aa)). Residues 1033 to 1035 (FHV) carry the PDZ-binding motif.

This sequence belongs to the protein kinase superfamily. Tyr protein kinase family. Ephrin receptor subfamily. In terms of assembly, heterotetramer upon binding of the ligand. The heterotetramer is composed of an ephrin dimer and a receptor dimer. Oligomerization is probably required to induce biological responses. Interacts (via SAM domain) with ANKS1A (via SAM domain).

The protein localises to the membrane. It carries out the reaction L-tyrosyl-[protein] + ATP = O-phospho-L-tyrosyl-[protein] + ADP + H(+). Functionally, receptor tyrosine kinase which binds promiscuously GPI-anchored ephrin-A family ligands residing on adjacent cells, leading to contact-dependent bidirectional signaling into neighboring cells. The signaling pathway downstream of the receptor is referred to as forward signaling while the signaling pathway downstream of the ephrin ligand is referred to as reverse signaling. This chain is Ephrin type-A receptor 6 (Epha6), found in Mus musculus (Mouse).